A 442-amino-acid chain; its full sequence is Transposase InsG for insertion sequence element IS4 (442 aa).

The protein belongs to the transposase 11 family.

In terms of biological role, involved in the transposition of the insertion sequence IS4. This is Transposase InsG for insertion sequence element IS4 (insG) from Escherichia coli (strain K12).